Reading from the N-terminus, the 243-residue chain is HTH-type quorum sensing-dependent transcriptional regulator RpaR (243 aa).

An HTH luxR-type domain is found at 174–239; that stretch reads KPIRRNRLTP…AAVAKALTLG (66 aa). Positions 198–217 form a DNA-binding region, H-T-H motif; that stretch reads AWEISVILCITERTVKFHLI.

Belongs to the autoinducer-regulated transcriptional regulatory protein family.

Functionally, responds to the quorum-sensing autoinducer 4-coumaroyl-homoserine lactone to regulate expression of several genes. Represses expression of rpaI in the absence of the inducer. The sequence is that of HTH-type quorum sensing-dependent transcriptional regulator RpaR from Rhodopseudomonas palustris (strain ATCC BAA-98 / CGA009).